The following is a 120-amino-acid chain: NAD(P)H-quinone oxidoreductase subunit 3, chloroplastic (120 aa).

3 helical membrane passes run 9-29, 64-84, and 88-108; these read IFWA…LISG, MFAL…PWAV, and ILGV…VVGS.

It belongs to the complex I subunit 3 family. In terms of assembly, NDH is composed of at least 16 different subunits, 5 of which are encoded in the nucleus.

It localises to the plastid. The protein localises to the chloroplast thylakoid membrane. It carries out the reaction a plastoquinone + NADH + (n+1) H(+)(in) = a plastoquinol + NAD(+) + n H(+)(out). The catalysed reaction is a plastoquinone + NADPH + (n+1) H(+)(in) = a plastoquinol + NADP(+) + n H(+)(out). NDH shuttles electrons from NAD(P)H:plastoquinone, via FMN and iron-sulfur (Fe-S) centers, to quinones in the photosynthetic chain and possibly in a chloroplast respiratory chain. The immediate electron acceptor for the enzyme in this species is believed to be plastoquinone. Couples the redox reaction to proton translocation, and thus conserves the redox energy in a proton gradient. This is NAD(P)H-quinone oxidoreductase subunit 3, chloroplastic from Nymphaea alba (White water-lily).